A 359-amino-acid polypeptide reads, in one-letter code: Histidinol-phosphate aminotransferase (359 aa).

Residue lysine 217 is modified to N6-(pyridoxal phosphate)lysine.

The protein belongs to the class-II pyridoxal-phosphate-dependent aminotransferase family. Histidinol-phosphate aminotransferase subfamily. Homodimer. It depends on pyridoxal 5'-phosphate as a cofactor.

It carries out the reaction L-histidinol phosphate + 2-oxoglutarate = 3-(imidazol-4-yl)-2-oxopropyl phosphate + L-glutamate. It functions in the pathway amino-acid biosynthesis; L-histidine biosynthesis; L-histidine from 5-phospho-alpha-D-ribose 1-diphosphate: step 7/9. The sequence is that of Histidinol-phosphate aminotransferase from Salmonella arizonae (strain ATCC BAA-731 / CDC346-86 / RSK2980).